We begin with the raw amino-acid sequence, 119 residues long: Small ribosomal subunit protein uS10 (119 aa).

This sequence belongs to the universal ribosomal protein uS10 family. Component of the small ribosomal subunit. Mature ribosomes consist of a small (40S) and a large (60S) subunit. The 40S subunit contains about 32 different proteins and 1 molecule of RNA (18S). The 60S subunit contains 45 different proteins and 3 molecules of RNA (25S, 5.8S and 5S).

It localises to the cytoplasm. Functionally, component of the ribosome, a large ribonucleoprotein complex responsible for the synthesis of proteins in the cell. The small ribosomal subunit (SSU) binds messenger RNAs (mRNAs) and translates the encoded message by selecting cognate aminoacyl-transfer RNA (tRNA) molecules. The large subunit (LSU) contains the ribosomal catalytic site termed the peptidyl transferase center (PTC), which catalyzes the formation of peptide bonds, thereby polymerizing the amino acids delivered by tRNAs into a polypeptide chain. The nascent polypeptides leave the ribosome through a tunnel in the LSU and interact with protein factors that function in enzymatic processing, targeting, and the membrane insertion of nascent chains at the exit of the ribosomal tunnel. This chain is Small ribosomal subunit protein uS10 (RPS20), found in Candida albicans (strain SC5314 / ATCC MYA-2876) (Yeast).